A 422-amino-acid chain; its full sequence is Anhydromevalonate phosphate decarboxylase (422 aa).

The Mn(2+) site is built by Asn134 and Glu197. The active-site Proton acceptor is the Asp244.

This sequence belongs to the UbiD family. Prenylated FMN is required as a cofactor. Requires Mn(2+) as cofactor.

It catalyses the reaction (2E)-3-methyl-5-phosphooxypent-2-enoate + H(+) = isopentenyl phosphate + CO2. It participates in isoprenoid biosynthesis; isopentenyl diphosphate biosynthesis via mevalonate pathway. Catalyzes the conversion of trans-anhydromevalonate 5-phosphate (tAHMP) into isopentenyl phosphate. Involved in the archaeal mevalonate (MVA) pathway, which provides fundamental precursors for isoprenoid biosynthesis, such as isopentenyl diphosphate (IPP) and dimethylallyl diphosphate (DMAPP). This Methanosarcina mazei (strain ATCC BAA-159 / DSM 3647 / Goe1 / Go1 / JCM 11833 / OCM 88) (Methanosarcina frisia) protein is Anhydromevalonate phosphate decarboxylase.